Consider the following 958-residue polypeptide: MLKSKTFLKKTRAGGVMKIVREHYLRDDIGCGAPGCAACGGAHEGPALEPQPQDPASSVCPQPHYLLPDTNVLLHQIDVLEDPAIRNVIVLQTVLQEVRNRSAPVYKRIRDVTNNQEKHFYTFTNEHHRETYVEQEQGENANDRNDRAIRVAAKWYNEHLKKMSADNQLQVIFITNDRRNKEKAIEEGIPAFTCEEYVKSLTANPELIDRLACLSEEGNEIESGKIIFSEHLPLSKLQQGIKSGTYLQGTFRASRENYLEATVWIHGDNEENKEIILQGLKHLNRAVHEDIVAVELLPKSQWVAPSSVVLHDEGQNEEDVEKEEETERMLKTAVSEKMLKPTGRVVGIIKRNWRPYCGMLSKSDIKESRRHLFTPADKRIPRIRIETRQASTLEGRRIIVAIDGWPRNSRYPNGHFVRNLGDVGEKETETEVLLLEHDVPHQPFSQAVLSFLPKMPWSITEKDMKNREDLRHLCICSVDPPGCTDIDDALHCRELENGNLEVGVHIADVSHFIRPGNALDQESARRGTTVYLCEKRIDMVPELLSSNLCSLKCDVDRLAFSCIWEMNHNAEILKTKFTKSVINSKASLTYAEAQLRIDSANMNDDITTSLRGLNKLAKILKKRRIEKGALTLSSPEVRFHMDSETHDPIDLQTKELRETNSMVEEFMLLANISVAKKIHEEFSEHALLRKHPAPPPSNYEILVKAARSRNLEIKTDTAKSLAESLDQAESPTFPYLNTLLRILATRCMMQAVYFCSGMDNDFHHYGLASPIYTHFTSPIRRYADVIVHRLLAVAIGADCTYPELTDKHKLADICKNLNFRHKMAQYAQRASVAFHTQLFFKSKGIVSEEAYILFVRKNAIVVLIPKYGLEGTVFFEEKDKPNPQLIYDDEIPSLKIEDTVFHVFDKVKVKIMLDSSNLQHQKIRMSLVEPQIPGISIPTDTSNMDLNGPKKKKMKLGK.

M1 carries the post-translational modification N-acetylmethionine. K18 carries the N6-acetyllysine modification. Residues 64-182 form the PINc domain; sequence HYLLPDTNVL…FITNDRRNKE (119 aa). S215 is modified (phosphoserine). Residues 227-319 enclose the CSD1 domain; the sequence is IFSEHLPLSK…LHDEGQNEED (93 aa). The 67-residue stretch at 372 to 438 folds into the CSD2 domain; it reads LFTPADKRIP…ETEVLLLEHD (67 aa). The region spanning 467–792 is the RNB domain; it reads REDLRHLCIC…ADVIVHRLLA (326 aa). The interval 938–958 is disordered; it reads PTDTSNMDLNGPKKKKMKLGK. The segment covering 949–958 has biased composition (basic residues); sequence PKKKKMKLGK.

The protein belongs to the RNR ribonuclease family. In terms of assembly, component of the RNA exosome complex; within the complex interacts with EXOSC4, EXOSC7 and EXOSC9 of the exosome core complex (Exo-9). The catalytically inactive RNA exosome core complex (Exo-9) associates with the catalytic subunit EXOSC10/RRP6. Exo-9 may associate with DIS3 to form the nucleolar exosome complex, or DIS3L to form the cytoplasmic exosome complex. Exo-9 is formed by a hexameric base ring consisting of the heterodimers EXOSC4-EXOSC9, EXOSC5-EXOSC8 and EXOSC6-EXOSC7, and a cap ring consisting of EXOSC1, EXOSC2 and EXOSC3; DIS3 associates with the base ring of Exo-9. The RNA exosome complex associates with cofactors C1D/RRP47, MPHOSPH6/MPP6 and MTREX/MTR4. Interacts with DHX34; the interaction is RNA-independent. It depends on Mg(2+) as a cofactor. Requires Mn(2+) as cofactor. In terms of tissue distribution, widely expressed.

The protein resides in the cytoplasm. It localises to the nucleus. Its subcellular location is the nucleolus. The protein localises to the nucleoplasm. Its function is as follows. Putative catalytic component of the RNA exosome complex which has 3'-&gt;5' exoribonuclease activity and participates in a multitude of cellular RNA processing and degradation events. In the nucleus, the RNA exosome complex is involved in proper maturation of stable RNA species such as rRNA, snRNA and snoRNA, in the elimination of RNA processing by-products and non-coding 'pervasive' transcripts, such as antisense RNA species and promoter-upstream transcripts (PROMPTs), and of mRNAs with processing defects, thereby limiting or excluding their export to the cytoplasm. The RNA exosome may be involved in Ig class switch recombination (CSR) and/or Ig variable region somatic hypermutation (SHM) by targeting AICDA deamination activity to transcribed dsDNA substrates. In the cytoplasm, the RNA exosome complex is involved in general mRNA turnover and specifically degrades inherently unstable mRNAs containing AU-rich elements (AREs) within their 3' untranslated regions, and in RNA surveillance pathways, preventing translation of aberrant mRNAs. It seems to be involved in degradation of histone mRNA. DIS3 has both 3'-5' exonuclease and endonuclease activities. The protein is Exosome complex exonuclease RRP44 (DIS3) of Homo sapiens (Human).